The chain runs to 245 residues: 1-(5-phosphoribosyl)-5-[(5-phosphoribosylamino)methylideneamino] imidazole-4-carboxamide isomerase (245 aa).

Residue Asp-13 is the Proton acceptor of the active site. Catalysis depends on Asp-132, which acts as the Proton donor.

Belongs to the HisA/HisF family.

It is found in the cytoplasm. It carries out the reaction 1-(5-phospho-beta-D-ribosyl)-5-[(5-phospho-beta-D-ribosylamino)methylideneamino]imidazole-4-carboxamide = 5-[(5-phospho-1-deoxy-D-ribulos-1-ylimino)methylamino]-1-(5-phospho-beta-D-ribosyl)imidazole-4-carboxamide. It functions in the pathway amino-acid biosynthesis; L-histidine biosynthesis; L-histidine from 5-phospho-alpha-D-ribose 1-diphosphate: step 4/9. This chain is 1-(5-phosphoribosyl)-5-[(5-phosphoribosylamino)methylideneamino] imidazole-4-carboxamide isomerase, found in Frankia alni (strain DSM 45986 / CECT 9034 / ACN14a).